A 224-amino-acid chain; its full sequence is UPF0758 protein mma_2551 (224 aa).

In terms of domain architecture, MPN spans 102-224 (SLNSPQAVKK…VYSFAEHGHL (123 aa)). 3 residues coordinate Zn(2+): His-173, His-175, and Asp-186. The short motif at 173 to 186 (HNHPSGSSEPSAAD) is the JAMM motif element.

Belongs to the UPF0758 family.

This chain is UPF0758 protein mma_2551, found in Janthinobacterium sp. (strain Marseille) (Minibacterium massiliensis).